The following is a 133-amino-acid chain: ATP synthase epsilon chain (133 aa).

It belongs to the ATPase epsilon chain family. As to quaternary structure, F-type ATPases have 2 components, CF(1) - the catalytic core - and CF(0) - the membrane proton channel. CF(1) has five subunits: alpha(3), beta(3), gamma(1), delta(1), epsilon(1). CF(0) has three main subunits: a, b and c.

The protein localises to the cell inner membrane. In terms of biological role, produces ATP from ADP in the presence of a proton gradient across the membrane. The sequence is that of ATP synthase epsilon chain from Paramagnetospirillum magneticum (strain ATCC 700264 / AMB-1) (Magnetospirillum magneticum).